A 219-amino-acid chain; its full sequence is Small ribosomal subunit protein uS3c (219 aa).

Residues 47–118 enclose the KH type-2 domain; sequence IRNHVRNSSN…KLRMTLVEVL (72 aa).

It belongs to the universal ribosomal protein uS3 family. As to quaternary structure, part of the 30S ribosomal subunit.

It localises to the plastid. It is found in the chloroplast. The sequence is that of Small ribosomal subunit protein uS3c (rps3) from Chara vulgaris (Common stonewort).